We begin with the raw amino-acid sequence, 207 residues long: Probable RNA 2'-phosphotransferase (207 aa).

The protein belongs to the KptA/TPT1 family.

Functionally, removes the 2'-phosphate from RNA via an intermediate in which the phosphate is ADP-ribosylated by NAD followed by a presumed transesterification to release the RNA and generate ADP-ribose 1''-2''-cyclic phosphate (APPR&gt;P). May function as an ADP-ribosylase. This Methanosarcina acetivorans (strain ATCC 35395 / DSM 2834 / JCM 12185 / C2A) protein is Probable RNA 2'-phosphotransferase.